A 324-amino-acid chain; its full sequence is 4-diphosphocytidyl-2-C-methyl-D-erythritol kinase (324 aa).

The active site involves K11. 108–118 (PIGAGLAGGST) provides a ligand contact to ATP. The active site involves D150.

This sequence belongs to the GHMP kinase family. IspE subfamily.

It carries out the reaction 4-CDP-2-C-methyl-D-erythritol + ATP = 4-CDP-2-C-methyl-D-erythritol 2-phosphate + ADP + H(+). Its pathway is isoprenoid biosynthesis; isopentenyl diphosphate biosynthesis via DXP pathway; isopentenyl diphosphate from 1-deoxy-D-xylulose 5-phosphate: step 3/6. Functionally, catalyzes the phosphorylation of the position 2 hydroxy group of 4-diphosphocytidyl-2C-methyl-D-erythritol. This chain is 4-diphosphocytidyl-2-C-methyl-D-erythritol kinase, found in Cyanothece sp. (strain PCC 7425 / ATCC 29141).